A 366-amino-acid polypeptide reads, in one-letter code: Autophagy-related protein 18b (366 aa).

3 WD repeats span residues 6–44 (SLPS…LCYE), 178–218 (AHRS…KSYS), and 223–265 (TYPS…NQRS).

The protein belongs to the WD repeat PROPPIN family. As to quaternary structure, component of the PI(3,5)P2 regulatory complex at least composed of ATG18, SAC/FIG4, FAB1 and VAC14. In terms of tissue distribution, expressed in roots, stems, flowers and leaves.

It is found in the preautophagosomal structure membrane. The protein resides in the vacuole membrane. The PI(3,5)P2 regulatory complex regulates both the synthesis and turnover of phosphatidylinositol 3,5-bisphosphate (PtdIns(3,5)P2). Required for autophagy. The chain is Autophagy-related protein 18b (ATG18B) from Arabidopsis thaliana (Mouse-ear cress).